The sequence spans 46 residues: Large ribosomal subunit protein bL36 (46 aa).

It belongs to the bacterial ribosomal protein bL36 family.

The protein is Large ribosomal subunit protein bL36 of Photorhabdus laumondii subsp. laumondii (strain DSM 15139 / CIP 105565 / TT01) (Photorhabdus luminescens subsp. laumondii).